The chain runs to 386 residues: Endonuclease III homolog 2, chloroplastic (386 aa).

Residues 1–50 (MILTGAASTFPIVARVLNAMNRRMYAATTLSSAKSISAESLNLRSDSNSE) constitute a chloroplast transit peptide. Residues 44 to 66 (RSDSNSEAAHGASESETRVSLRK) form a disordered region. The 27-residue stretch at 252 to 278 (YDGDIPRTLEELLSLPGVGPKIAHLVL) folds into the HhH domain. The active-site Nucleophile; for N-glycosylase activity is the K272. Residues C347, C354, C357, and C363 each contribute to the [4Fe-4S] cluster site.

The protein belongs to the Nth/MutY family. [4Fe-4S] cluster is required as a cofactor.

The protein localises to the plastid. The protein resides in the chloroplast stroma. It localises to the chloroplast nucleoid. It catalyses the reaction 2'-deoxyribonucleotide-(2'-deoxyribose 5'-phosphate)-2'-deoxyribonucleotide-DNA = a 3'-end 2'-deoxyribonucleotide-(2,3-dehydro-2,3-deoxyribose 5'-phosphate)-DNA + a 5'-end 5'-phospho-2'-deoxyribonucleoside-DNA + H(+). Its function is as follows. Bifunctional DNA N-glycosylase with associated apurinic/apyrimidinic (AP) lyase function that catalyzes the first step in base excision repair (BER), the primary repair pathway for the repair of oxidative DNA damage. The DNA N-glycosylase activity releases the damaged DNA base from DNA by cleaving the N-glycosidic bond, leaving an AP site. The AP lyase activity cleaves the phosphodiester bond 3' to the AP site by a beta-elimination. Primarily recognizes and repairs oxidative base damage of pyrimidines. The chain is Endonuclease III homolog 2, chloroplastic (NTH2) from Arabidopsis thaliana (Mouse-ear cress).